The chain runs to 406 residues: Cysteine desulfurase (406 aa).

Lys226 carries the post-translational modification N6-(pyridoxal phosphate)lysine. The active-site Cysteine persulfide intermediate is the Cys364.

This sequence belongs to the class-V pyridoxal-phosphate-dependent aminotransferase family. Csd subfamily. Homodimer. Interacts with SufE and the SufBCD complex composed of SufB, SufC and SufD. The interaction with SufE is required to mediate the direct transfer of the sulfur atom from the S-sulfanylcysteine. Requires pyridoxal 5'-phosphate as cofactor.

The protein localises to the cytoplasm. The catalysed reaction is (sulfur carrier)-H + L-cysteine = (sulfur carrier)-SH + L-alanine. It catalyses the reaction L-selenocysteine + AH2 = hydrogenselenide + L-alanine + A + H(+). It participates in cofactor biosynthesis; iron-sulfur cluster biosynthesis. In terms of biological role, cysteine desulfurases mobilize the sulfur from L-cysteine to yield L-alanine, an essential step in sulfur metabolism for biosynthesis of a variety of sulfur-containing biomolecules. Component of the suf operon, which is activated and required under specific conditions such as oxidative stress and iron limitation. Acts as a potent selenocysteine lyase in vitro, that mobilizes selenium from L-selenocysteine. Selenocysteine lyase activity is however unsure in vivo. In Escherichia fergusonii (strain ATCC 35469 / DSM 13698 / CCUG 18766 / IAM 14443 / JCM 21226 / LMG 7866 / NBRC 102419 / NCTC 12128 / CDC 0568-73), this protein is Cysteine desulfurase.